A 548-amino-acid chain; its full sequence is Zinc metalloproteinase (548 aa).

The first 28 residues, 1–28, serve as a signal peptide directing secretion; the sequence is MKKYYAVTGIALAVGMLCTTQLAGATQA. H362 provides a ligand contact to Zn(2+). E363 is an active-site residue. Zn(2+) contacts are provided by H366 and E386. The segment at 440–459 is disordered; that stretch reads SNWKPTATNPNDNNDQGGVH. Residues 442–459 show a composition bias toward polar residues; the sequence is WKPTATNPNDNNDQGGVH. H459 functions as the Proton donor in the catalytic mechanism.

Belongs to the peptidase M4 family. Requires Ca(2+) as cofactor. It depends on Zn(2+) as a cofactor.

It localises to the secreted. It is found in the cell wall. In terms of biological role, zinc metalloprotease with hemolytic properties. This chain is Zinc metalloproteinase (hly), found in Renibacterium salmoninarum.